A 180-amino-acid chain; its full sequence is Small ribosomal subunit protein eS10y (180 aa).

The disordered stretch occupies residues 92 to 180; it reads LKKQQKPLGR…GGGAAGSDLP (89 aa). Residues 108–128 show a composition bias toward basic and acidic residues; the sequence is DRPRGPPRGDGERRFGDRDGY. Residues 152–180 show a composition bias toward gly residues; sequence FRGGAGGARQGFGRGAGGFGGGAAGSDLP.

The protein belongs to the eukaryotic ribosomal protein eS10 family.

The protein resides in the cytoplasm. The sequence is that of Small ribosomal subunit protein eS10y (RPS10B) from Arabidopsis thaliana (Mouse-ear cress).